The sequence spans 359 residues: Insulin gene enhancer protein isl-2a (359 aa).

2 consecutive LIM zinc-binding domains span residues 27–80 (CVGC…CKRD) and 30–143 (CGSQ…RADH). Residues 171-190 (EPVPVRQPPHRNHVHKQSEK) are disordered. Residues 191–250 (TTRVRTVLNEKQLHTLRTCYNANPRPDALMKEQLVEMTGLSPRVIRVWFQNKRCKDKKKS) constitute a DNA-binding region (homeobox). Low complexity predominate over residues 326–336 (ESGSLGNSSGS). The interval 326–359 (ESGSLGNSSGSDVTSLSSQLPDTPNSMVPSPVET) is disordered. Residues 337 to 359 (DVTSLSSQLPDTPNSMVPSPVET) show a composition bias toward polar residues.

The protein resides in the nucleus. Functionally, binds to one of the cis-acting domain of the insulin gene enhancer. May be involved in subtype specialization of primary motoneurons. This chain is Insulin gene enhancer protein isl-2a (isl2a), found in Danio rerio (Zebrafish).